The following is a 467-amino-acid chain: MRRYSALPGGGARPDTLADRLHRYRGVLLVILAPLALVSLVLLLMPRSPASSSAAAGRRWGPLDANKYAVIFDAGSSGSRVHVFRFDANLDLLHIGDQIELFVQKKPGLSEYANNPQEAAKSLVSLLEDAKRVVPVELRGQTPVRVGATAGLRALGAEKSEEILQAVRDLLREKSSFKTQPDWVTVLDGPQEGAYEWVTINYLLGKLGKTYADTVGVVDLGGGSVQMAYAIAEKDAVKAPKPSEGEDSYVKKLFLKGTTYYLYVHSYLHYGLLAARAEILKAGNGKGYSYCTLEGHQGQYKYGNGKFEASASPSGASYSKCRDDVVKALKVDQACTHMKCSFGGIWNGGGGAGQKNLFVASFFFDRAAEAGFVNPKAPVAKVKPSDFEKAAKRACKLNLKDAEAAYPGVQKDNIPYICMDLVYQYTLLVDGFGVGSHQEMTLVKKVPYSNAFVEAAWPLGSAIEVAS.

The Cytoplasmic portion of the chain corresponds to 1 to 25; the sequence is MRRYSALPGGGARPDTLADRLHRYR. A helical; Signal-anchor for type II membrane protein transmembrane segment spans residues 26 to 46; sequence GVLLVILAPLALVSLVLLLMP. At 47-467 the chain is on the extracellular side; that stretch reads RSPASSSAAA…PLGSAIEVAS (421 aa). 70 to 80 is an ATP binding site; sequence VIFDAGSSGSR. Glutamate 192 functions as the Proton acceptor in the catalytic mechanism. Residue 216-226 participates in ATP binding; it reads GVVDLGGGSVQ.

The protein belongs to the GDA1/CD39 NTPase family. Ca(2+) serves as cofactor.

It localises to the membrane. The catalysed reaction is a ribonucleoside 5'-triphosphate + 2 H2O = a ribonucleoside 5'-phosphate + 2 phosphate + 2 H(+). Its function is as follows. Catalyzes the hydrolysis of phosphoanhydride bonds of nucleoside tri- and di-phosphates. In Oryza sativa subsp. japonica (Rice), this protein is Probable apyrase 2 (APY2).